The primary structure comprises 413 residues: Arginine biosynthesis bifunctional protein ArgJ 1 (413 aa).

Residues T154, K180, T191, E277, N408, and T413 each coordinate substrate. Residue T191 is the Nucleophile of the active site.

This sequence belongs to the ArgJ family. As to quaternary structure, heterotetramer of two alpha and two beta chains.

The protein localises to the cytoplasm. The catalysed reaction is N(2)-acetyl-L-ornithine + L-glutamate = N-acetyl-L-glutamate + L-ornithine. It catalyses the reaction L-glutamate + acetyl-CoA = N-acetyl-L-glutamate + CoA + H(+). The protein operates within amino-acid biosynthesis; L-arginine biosynthesis; L-ornithine and N-acetyl-L-glutamate from L-glutamate and N(2)-acetyl-L-ornithine (cyclic): step 1/1. Its pathway is amino-acid biosynthesis; L-arginine biosynthesis; N(2)-acetyl-L-ornithine from L-glutamate: step 1/4. In terms of biological role, catalyzes two activities which are involved in the cyclic version of arginine biosynthesis: the synthesis of N-acetylglutamate from glutamate and acetyl-CoA as the acetyl donor, and of ornithine by transacetylation between N(2)-acetylornithine and glutamate. This chain is Arginine biosynthesis bifunctional protein ArgJ 1, found in Nostoc sp. (strain PCC 7120 / SAG 25.82 / UTEX 2576).